The following is a 368-amino-acid chain: Aminomethyltransferase (368 aa).

The protein belongs to the GcvT family. As to quaternary structure, the glycine cleavage system is composed of four proteins: P, T, L and H.

It catalyses the reaction N(6)-[(R)-S(8)-aminomethyldihydrolipoyl]-L-lysyl-[protein] + (6S)-5,6,7,8-tetrahydrofolate = N(6)-[(R)-dihydrolipoyl]-L-lysyl-[protein] + (6R)-5,10-methylene-5,6,7,8-tetrahydrofolate + NH4(+). Functionally, the glycine cleavage system catalyzes the degradation of glycine. In Xylella fastidiosa (strain M23), this protein is Aminomethyltransferase.